The sequence spans 77 residues: Acyl carrier protein (77 aa).

One can recognise a Carrier domain in the interval 1–76 (MSIEERVKKI…SAIDYVAKAN (76 aa)). Residue Ser36 is modified to O-(pantetheine 4'-phosphoryl)serine.

The protein belongs to the acyl carrier protein (ACP) family. Post-translationally, 4'-phosphopantetheine is transferred from CoA to a specific serine of apo-ACP by AcpS. This modification is essential for activity because fatty acids are bound in thioester linkage to the sulfhydryl of the prosthetic group.

Its subcellular location is the cytoplasm. It participates in lipid metabolism; fatty acid biosynthesis. Carrier of the growing fatty acid chain in fatty acid biosynthesis. The polypeptide is Acyl carrier protein (Haemophilus ducreyi (strain 35000HP / ATCC 700724)).